The following is a 530-amino-acid chain: Phosphoenolpyruvate carboxykinase (ATP) (530 aa).

R58, Y195, and K201 together coordinate substrate. ATP is bound by residues K201, H220, and 236-244 (GLSGTGKTT). The Mn(2+) site is built by K201 and H220. Residue D257 coordinates Mn(2+). ATP is bound by residues E285, R321, 440–441 (RI), and T446. R321 contributes to the substrate binding site.

It belongs to the phosphoenolpyruvate carboxykinase (ATP) family. The cofactor is Mn(2+).

It is found in the cytoplasm. The enzyme catalyses oxaloacetate + ATP = phosphoenolpyruvate + ADP + CO2. Its pathway is carbohydrate biosynthesis; gluconeogenesis. Functionally, involved in the gluconeogenesis. Catalyzes the conversion of oxaloacetate (OAA) to phosphoenolpyruvate (PEP) through direct phosphoryl transfer between the nucleoside triphosphate and OAA. This chain is Phosphoenolpyruvate carboxykinase (ATP), found in Staphylococcus haemolyticus (strain JCSC1435).